Consider the following 234-residue polypeptide: Enolase-phosphatase E1 (234 aa).

The Mg(2+) site is built by Asp-13 and Glu-15. Substrate contacts are provided by residues 127-128 and Lys-164; that span reads SS. Asp-191 is a Mg(2+) binding site.

Belongs to the HAD-like hydrolase superfamily. MasA/MtnC family. As to quaternary structure, monomer. Mg(2+) serves as cofactor.

It localises to the cytoplasm. It is found in the nucleus. The enzyme catalyses 5-methylsulfanyl-2,3-dioxopentyl phosphate + H2O = 1,2-dihydroxy-5-(methylsulfanyl)pent-1-en-3-one + phosphate. The protein operates within amino-acid biosynthesis; L-methionine biosynthesis via salvage pathway; L-methionine from S-methyl-5-thio-alpha-D-ribose 1-phosphate: step 3/6. It functions in the pathway amino-acid biosynthesis; L-methionine biosynthesis via salvage pathway; L-methionine from S-methyl-5-thio-alpha-D-ribose 1-phosphate: step 4/6. Bifunctional enzyme that catalyzes the enolization of 2,3-diketo-5-methylthiopentyl-1-phosphate (DK-MTP-1-P) into the intermediate 2-hydroxy-3-keto-5-methylthiopentenyl-1-phosphate (HK-MTPenyl-1-P), which is then dephosphorylated to form the acireductone 1,2-dihydroxy-3-keto-5-methylthiopentene (DHK-MTPene). This Podospora anserina (strain S / ATCC MYA-4624 / DSM 980 / FGSC 10383) (Pleurage anserina) protein is Enolase-phosphatase E1.